The following is a 62-amino-acid chain: Toxin Tst2 (62 aa).

Residues lysine 1–cysteine 62 enclose the LCN-type CS-alpha/beta domain. Cystine bridges form between cysteine 11–cysteine 62, cysteine 15–cysteine 38, cysteine 23–cysteine 43, and cysteine 27–cysteine 45. Cysteine 62 carries the post-translational modification Cysteine amide.

In terms of tissue distribution, expressed by the venom gland.

It localises to the secreted. Alpha toxins bind voltage-independently at site-3 of sodium channels (Nav) and inhibit the inactivation of the activated channels, thereby blocking neuronal transmission. Is toxic to mice. This is Toxin Tst2 from Tityus stigmurus (Brazilian scorpion).